Here is a 441-residue protein sequence, read N- to C-terminus: MSKVTPQPKIGFVSLGCPKNLVDSERILTELRTEGYDVVPSYDDANMVIVNTCGFIDSAVQESLEAIGEALNENGKVIVTGCLGAKEDQIREVHPKVLEITGPHSYEQVLEHVHHYVPKPKHNPFLSLVPEQGVKLTPRHYAYLKISEGCNHRCTFCIIPSMRGDLVSRPIGEVLSEAKRLVDAGVKEILVISQDTSAYGVDVKHRTGFHNGEPVKTSMVSLCEQLSKLGIWTRLHYVYPYPHVDDVIPLMAEGKILPYLDIPLQHASPRILKLMKRPGSVDRQLARIKQWREICPELTLRSTFIVGFPGETEEDFQMLLDFLKEARLDRVGCFKYSPVEGADANALPDQVPEEVKEERWNRFMQLQQQISAERLQEKVGREILVIIDEVDEEGAIGRSMADAPEIDGAVYLNGETNVKPGDILRVKVEHADEYDLWGSRV.

The MTTase N-terminal domain maps to 8 to 118 (PKIGFVSLGC…VLEHVHHYVP (111 aa)). [4Fe-4S] cluster-binding residues include C17, C53, C82, C150, C154, and C157. The region spanning 136 to 373 (LTPRHYAYLK…MQLQQQISAE (238 aa)) is the Radical SAM core domain. Residues 376–441 (QEKVGREILV…DEYDLWGSRV (66 aa)) enclose the TRAM domain.

The protein belongs to the methylthiotransferase family. RimO subfamily. [4Fe-4S] cluster is required as a cofactor.

The protein localises to the cytoplasm. It carries out the reaction L-aspartate(89)-[ribosomal protein uS12]-hydrogen + (sulfur carrier)-SH + AH2 + 2 S-adenosyl-L-methionine = 3-methylsulfanyl-L-aspartate(89)-[ribosomal protein uS12]-hydrogen + (sulfur carrier)-H + 5'-deoxyadenosine + L-methionine + A + S-adenosyl-L-homocysteine + 2 H(+). Catalyzes the methylthiolation of an aspartic acid residue of ribosomal protein uS12. The sequence is that of Ribosomal protein uS12 methylthiotransferase RimO from Shigella flexneri.